The sequence spans 570 residues: Sulfite reductase [NADPH] hemoprotein beta-component (570 aa).

Residues Cys434, Cys440, Cys479, and Cys483 each coordinate [4Fe-4S] cluster. Cys483 contributes to the siroheme binding site.

The protein belongs to the nitrite and sulfite reductase 4Fe-4S domain family. Alpha(8)-beta(8). The alpha component is a flavoprotein, the beta component is a hemoprotein. Requires siroheme as cofactor. It depends on [4Fe-4S] cluster as a cofactor.

It carries out the reaction hydrogen sulfide + 3 NADP(+) + 3 H2O = sulfite + 3 NADPH + 4 H(+). It participates in sulfur metabolism; hydrogen sulfide biosynthesis; hydrogen sulfide from sulfite (NADPH route): step 1/1. In terms of biological role, component of the sulfite reductase complex that catalyzes the 6-electron reduction of sulfite to sulfide. This is one of several activities required for the biosynthesis of L-cysteine from sulfate. The chain is Sulfite reductase [NADPH] hemoprotein beta-component from Escherichia coli O127:H6 (strain E2348/69 / EPEC).